A 355-amino-acid polypeptide reads, in one-letter code: MLIFPLINDLSRKIIHVDMDAFFAAIEVRDSPALKGKPVIIGADPRLSGGRGVVSTCNYEARAFGIHSAMSSKEAYERCPQAIFISGNYEKYQEVGRQVREIFHRYTDLVEPMSIDEAYLDVTENKLGISSAVKIAKLIQYDIWNELHLTASAGVSYNKFLAKIASDMEKPHGLTLILPEDAVGILASLPVEKFHGVGKKTVERLHEMGVYTGQDLLDVPEMVLIDRFGRFGFDLYRKARGISNSPVKVDRVRKSSGKERTYRKLLYREEDVLKELISLCQRVAASLKRNGKKGRTIVLKVRYGDFSTLTKRHSLEVYTDQTETIEKEVRQLIEEIGKIEKGIRLLGVTVTNFQT.

The 185-residue stretch at 14–198 (IIHVDMDAFF…LPVEKFHGVG (185 aa)) folds into the UmuC domain. Mg(2+) contacts are provided by D18 and D116. Residue E117 is part of the active site.

This sequence belongs to the DNA polymerase type-Y family. Monomer. The cofactor is Mg(2+).

The protein localises to the cytoplasm. It catalyses the reaction DNA(n) + a 2'-deoxyribonucleoside 5'-triphosphate = DNA(n+1) + diphosphate. Functionally, poorly processive, error-prone DNA polymerase involved in untargeted mutagenesis. Copies undamaged DNA at stalled replication forks, which arise in vivo from mismatched or misaligned primer ends. These misaligned primers can be extended by PolIV. Exhibits no 3'-5' exonuclease (proofreading) activity. May be involved in translesional synthesis, in conjunction with the beta clamp from PolIII. The chain is DNA polymerase IV from Streptococcus suis (strain 98HAH33).